We begin with the raw amino-acid sequence, 124 residues long: Fluoride-specific ion channel FluC (124 aa).

4 helical membrane-spanning segments follow: residues 3 to 23 (VLLIFLGCGAGGVARYGVSNL), 34 to 54 (IGTLIVNITGSLLMGILFIFI), 68 to 88 (LLLIGFLGGYTTFSSFSIETF), and 100 to 120 (ALNVLLSVALCIAGAWLGVLI). Residues Gly-75 and Thr-78 each coordinate Na(+).

The protein belongs to the fluoride channel Fluc/FEX (TC 1.A.43) family.

The protein localises to the cell inner membrane. It catalyses the reaction fluoride(in) = fluoride(out). With respect to regulation, na(+) is not transported, but it plays an essential structural role and its presence is essential for fluoride channel function. In terms of biological role, fluoride-specific ion channel. Important for reducing fluoride concentration in the cell, thus reducing its toxicity. The sequence is that of Fluoride-specific ion channel FluC from Coxiella burnetii (strain Dugway 5J108-111).